Consider the following 245-residue polypeptide: Cell division protein ZapD (245 aa).

The protein belongs to the ZapD family. In terms of assembly, interacts with FtsZ.

It is found in the cytoplasm. Its function is as follows. Cell division factor that enhances FtsZ-ring assembly. Directly interacts with FtsZ and promotes bundling of FtsZ protofilaments, with a reduction in FtsZ GTPase activity. The sequence is that of Cell division protein ZapD from Photobacterium profundum (strain SS9).